Reading from the N-terminus, the 170-residue chain is Small ribosomal subunit protein mS25 (170 aa).

It belongs to the mitochondrion-specific ribosomal protein mS25 family. In terms of assembly, component of the mitochondrial ribosome small subunit (28S) which comprises a 12S rRNA and about 30 distinct proteins.

It localises to the mitochondrion. This is Small ribosomal subunit protein mS25 (mrps-25) from Caenorhabditis elegans.